Consider the following 558-residue polypeptide: 2-isopropylmalate synthase (558 aa).

In terms of domain architecture, Pyruvate carboxyltransferase spans 31-306 (PIWCAVDLRD…DPGIDFSNID (276 aa)). Mg(2+) is bound by residues D40, H245, H247, and N281. The regulatory domain stretch occupies residues 440-558 (AGSPYSFLEH…LCAANHLSDK (119 aa)).

The protein belongs to the alpha-IPM synthase/homocitrate synthase family. LeuA type 2 subfamily. Homodimer. Mg(2+) is required as a cofactor.

The protein resides in the cytoplasm. It carries out the reaction 3-methyl-2-oxobutanoate + acetyl-CoA + H2O = (2S)-2-isopropylmalate + CoA + H(+). The protein operates within amino-acid biosynthesis; L-leucine biosynthesis; L-leucine from 3-methyl-2-oxobutanoate: step 1/4. In terms of biological role, catalyzes the condensation of the acetyl group of acetyl-CoA with 3-methyl-2-oxobutanoate (2-ketoisovalerate) to form 3-carboxy-3-hydroxy-4-methylpentanoate (2-isopropylmalate). This Rhodospirillum rubrum (strain ATCC 11170 / ATH 1.1.1 / DSM 467 / LMG 4362 / NCIMB 8255 / S1) protein is 2-isopropylmalate synthase.